Consider the following 204-residue polypeptide: Tetraspanin-13 (204 aa).

Residues 1–19 are Cytoplasmic-facing; that stretch reads MVCGGFSCSKNCLCALNLL. Residues 20 to 40 traverse the membrane as a helical segment; that stretch reads YTLVSLLLIGIAAWGIGFGLI. The Extracellular portion of the chain corresponds to 41 to 44; sequence SSLR. The chain crosses the membrane as a helical span at residues 45-65; that stretch reads VVGVVIAVGIFLFLIALVGLI. Residues 66–72 lie on the Cytoplasmic side of the membrane; it reads GAVKHHQ. A helical membrane pass occupies residues 73 to 93; that stretch reads VLLFFYMIILLLVFIVQFSVS. The Extracellular portion of the chain corresponds to 94-167; sequence CACLALNREQ…IGEYAGEVLR (74 aa). N-linked (GlcNAc...) asparagine glycosylation is found at asparagine 113 and asparagine 137. A Phosphoserine modification is found at serine 143. The helical transmembrane segment at 168 to 188 threads the bilayer; sequence FVGGIGLFFSFTEILGVWLTY. The Cytoplasmic segment spans residues 189–204; sequence RYRNQKDPRANPSAFL.

This sequence belongs to the tetraspanin (TM4SF) family.

The protein localises to the membrane. This chain is Tetraspanin-13 (Tspan13), found in Mus musculus (Mouse).